The chain runs to 195 residues: Thymidine kinase (195 aa).

ATP is bound by residues 15–22 (GSMFSGKS) and 88–91 (DEVQ). The active-site Proton acceptor is E89. Residues C145, C148, C183, and C186 each contribute to the Zn(2+) site.

The protein belongs to the thymidine kinase family. As to quaternary structure, homotetramer.

The protein resides in the cytoplasm. The catalysed reaction is thymidine + ATP = dTMP + ADP + H(+). This chain is Thymidine kinase, found in Bacillus cereus (strain ZK / E33L).